Consider the following 335-residue polypeptide: Anthranilate phosphoribosyltransferase (335 aa).

5-phospho-alpha-D-ribose 1-diphosphate is bound by residues glycine 79, 82–83 (GD), threonine 87, 89–92 (NIST), 107–115 (KHGSRSVSS), and serine 119. Glycine 79 contacts anthranilate. Serine 91 serves as a coordination point for Mg(2+). Arginine 165 lines the anthranilate pocket. Aspartate 223 and glutamate 224 together coordinate Mg(2+).

This sequence belongs to the anthranilate phosphoribosyltransferase family. Homodimer. The cofactor is Mg(2+).

The enzyme catalyses N-(5-phospho-beta-D-ribosyl)anthranilate + diphosphate = 5-phospho-alpha-D-ribose 1-diphosphate + anthranilate. Its pathway is amino-acid biosynthesis; L-tryptophan biosynthesis; L-tryptophan from chorismate: step 2/5. Functionally, catalyzes the transfer of the phosphoribosyl group of 5-phosphorylribose-1-pyrophosphate (PRPP) to anthranilate to yield N-(5'-phosphoribosyl)-anthranilate (PRA). In Helicobacter pylori (strain G27), this protein is Anthranilate phosphoribosyltransferase.